We begin with the raw amino-acid sequence, 275 residues long: Mitochondrial outer membrane protein porin (275 aa).

Position 1 is a blocked amino end (Met) (methionine 1).

The protein belongs to the eukaryotic mitochondrial porin family. Highly divergent.

The protein localises to the mitochondrion outer membrane. Forms a channel of about 1,7 nM through the cell membrane that allows diffusion of small hydrophilic molecules. The channel adopts an open conformation at low or zero membrane potential and a closed conformation at potentials above 20 mv. The open state has a weak anion selectivity whereas the closed state is cation-selective. In Dictyostelium discoideum (Social amoeba), this protein is Mitochondrial outer membrane protein porin (porA).